A 99-amino-acid polypeptide reads, in one-letter code: Large ribosomal subunit protein eL21 (99 aa).

Over residues 1-14 (MPNSNGPLSNSGGK) the composition is skewed to polar residues. A disordered region spans residues 1–38 (MPNSNGPLSNSGGKLQNDPRDRGTSPPQRAIADYDDGE).

It belongs to the eukaryotic ribosomal protein eL21 family.

The chain is Large ribosomal subunit protein eL21 from Halobacterium salinarum (strain ATCC 29341 / DSM 671 / R1).